We begin with the raw amino-acid sequence, 166 residues long: NADH-quinone oxidoreductase subunit E (166 aa).

Cys-92, Cys-97, Cys-133, and Cys-137 together coordinate [2Fe-2S] cluster.

The protein belongs to the complex I 24 kDa subunit family. Composed of 13 different subunits. Subunits NuoCD, E, F, and G constitute the peripheral sector of the complex. Requires [2Fe-2S] cluster as cofactor.

The catalysed reaction is a quinone + NADH + 5 H(+)(in) = a quinol + NAD(+) + 4 H(+)(out). Functionally, NDH-1 shuttles electrons from NADH, via FMN and iron-sulfur (Fe-S) centers, to quinones in the respiratory chain. The immediate electron acceptor for the enzyme in this species is believed to be ubiquinone. Couples the redox reaction to proton translocation (for every two electrons transferred, four hydrogen ions are translocated across the cytoplasmic membrane), and thus conserves the redox energy in a proton gradient. In Shigella flexneri, this protein is NADH-quinone oxidoreductase subunit E (nuoE).